Here is a 30-residue protein sequence, read N- to C-terminus: Kappa-sparatoxin-Hv1d (30 aa).

3 disulfides stabilise this stretch: Cys3/Cys17, Cys10/Cys22, and Cys16/Cys26.

In terms of tissue distribution, expressed by the venom gland.

It localises to the secreted. Its function is as follows. Inhibitor of voltage-gated potassium channels of the Kv4/KCND family. Blocks calcium channels (Cav). The protein is Kappa-sparatoxin-Hv1d of Heteropoda venatoria (Brown huntsman spider).